A 551-amino-acid chain; its full sequence is Probable 4-coumarate--CoA ligase 2 (551 aa).

Positions 205, 206, 207, 208, 209, and 213 each coordinate ATP. 2 residues coordinate (E)-4-coumaroyl-AMP: Tyr253 and Thr257. Lys274 serves as a coordination point for CoA. Residues 276–346 (EFVRFLDLIQ…RFKGKLIIKQ (71 aa)) are SBD1. Ala323, Gln346, Gly347, and Thr351 together coordinate (E)-4-coumaroyl-AMP. Positions 346, 347, 351, 430, and 445 each coordinate ATP. Positions 347–409 (GYGATELSPA…IKGPNVMLGY (63 aa)) are SBD2. (E)-4-coumaroyl-AMP is bound by residues Lys447 and Lys451. CoA is bound by residues Lys453 and Gly454. Lys537 contributes to the ATP binding site.

This sequence belongs to the ATP-dependent AMP-binding enzyme family. Requires Mg(2+) as cofactor.

The enzyme catalyses (E)-4-coumarate + ATP + CoA = (E)-4-coumaroyl-CoA + AMP + diphosphate. It carries out the reaction (E)-4-coumarate + ATP + H(+) = (E)-4-coumaroyl-AMP + diphosphate. The catalysed reaction is (E)-4-coumaroyl-AMP + CoA = (E)-4-coumaroyl-CoA + AMP + H(+). It participates in phytoalexin biosynthesis; 3,4',5-trihydroxystilbene biosynthesis; 3,4',5-trihydroxystilbene from trans-4-coumarate: step 1/2. Carboxylate--CoA ligase that may use 4-coumarate as substrate. Follows a two-step reaction mechanism, wherein the carboxylate substrate first undergoes adenylation by ATP, followed by a thioesterification in the presence of CoA to yield the final CoA thioester. This chain is Probable 4-coumarate--CoA ligase 2 (4cl2), found in Dictyostelium discoideum (Social amoeba).